The following is a 98-amino-acid chain: Serine rich endogenous peptide 10 (98 aa).

An N-terminal signal peptide occupies residues 1–29; that stretch reads MERKKFSSKFIHLLIVFLLLCTFLSRTES. The segment at 50-98 is disordered; sequence NSAIGTPSSTSDHAPGSNGRKLMSIYRPNGDIFTGPSGSGHGGGRTPAP. Positions 52–61 are enriched in polar residues; the sequence is AIGTPSSTSD. 2 short sequence motifs (SCOOP motif) span residues 52–66 and 80–94; these read AIGTPSSTSDHAPGS and DIFTGPSGSGHGGGR. 2 short sequence motifs (sxS motif essential for MIK2 binding) span residues 58–60 and 86–88; these read STS and SGS. The span at 86-98 shows a compositional bias: gly residues; that stretch reads SGSGHGGGRTPAP.

This sequence belongs to the serine rich endogenous peptide (SCOOP) phytocytokine family. Interacts with MIK2 (via extracellular leucine-rich repeat domain); this interaction triggers the formation of complex between MIK2 and the BAK1/SERK3 and SERK4 coreceptors, and subsequent BAK1 activation by phosphorylation. In terms of tissue distribution, mostly expressed in leaves and seedlings shoots, to a lower extent, in roots, but barely in flowers.

It localises to the cell membrane. The protein localises to the secreted. It is found in the extracellular space. The protein resides in the apoplast. Functionally, brassicaceae-specific phytocytokine (plant endogenous peptide released into the apoplast) perceived by MIK2 in a BAK1/SERK3 and SERK4 coreceptors-dependent manner, that modulates various physiological and antimicrobial processes including growth prevention and reactive oxygen species (ROS) response regulation. Inhibits root growth and regulates root meristems. Promotes ROS production and MAPK (e.g. MPK3, MPK4 and MPK6) activation in a MIK2-dependent manner, thus leading to the up-regulation of immune-related marker genes (e.g. WRKY30, WRKY33 and CYP81F2). The sequence is that of Serine rich endogenous peptide 10 from Arabidopsis thaliana (Mouse-ear cress).